Reading from the N-terminus, the 414-residue chain is Phosphoglycerate kinase (414 aa).

Residues 20–22 (DIN), Arg-37, 60–63 (HQSR), Arg-117, and Arg-164 each bind substrate. ATP-binding positions include Glu-338 and 364-367 (GGHL).

Belongs to the phosphoglycerate kinase family. Monomer.

The protein localises to the cytoplasm. It catalyses the reaction (2R)-3-phosphoglycerate + ATP = (2R)-3-phospho-glyceroyl phosphate + ADP. The protein operates within carbohydrate degradation; glycolysis; pyruvate from D-glyceraldehyde 3-phosphate: step 2/5. The protein is Phosphoglycerate kinase of Methanococcus maripaludis (strain DSM 14266 / JCM 13030 / NBRC 101832 / S2 / LL).